Consider the following 138-residue polypeptide: Phospholipase A2 EC3 (138 aa).

The first 16 residues, 1–16 (MRTLWIVAVWLMGVEG), serve as a signal peptide directing secretion. 7 disulfides stabilise this stretch: Cys42–Cys131, Cys44–Cys60, Cys59–Cys111, Cys65–Cys138, Cys66–Cys104, Cys73–Cys97, and Cys91–Cys102. 3 residues coordinate Ca(2+): Tyr43, Gly45, and Gly47. Residue His63 is part of the active site. Asp64 contacts Ca(2+). Asp105 is an active-site residue.

Belongs to the phospholipase A2 family. Group II subfamily. The cofactor is Ca(2+).

It is found in the secreted. It carries out the reaction a 1,2-diacyl-sn-glycero-3-phosphocholine + H2O = a 1-acyl-sn-glycero-3-phosphocholine + a fatty acid + H(+). PA2 catalyzes the calcium-dependent hydrolysis of the 2-acyl groups in 3-sn-phosphoglycerides. This chain is Phospholipase A2 EC3, found in Echis coloratus (Carpet viper).